Here is a 98-residue protein sequence, read N- to C-terminus: Large ribosomal subunit protein bL25 (98 aa).

Residues 1–23 (MANFVLNAQARAEDKQGKGASRR) are disordered.

This sequence belongs to the bacterial ribosomal protein bL25 family. Part of the 50S ribosomal subunit; part of the 5S rRNA/L5/L18/L25 subcomplex. Contacts the 5S rRNA. Binds to the 5S rRNA independently of L5 and L18.

In terms of biological role, this is one of the proteins that binds to the 5S RNA in the ribosome where it forms part of the central protuberance. The polypeptide is Large ribosomal subunit protein bL25 (Acinetobacter baumannii (strain AB307-0294)).